Here is a 337-residue protein sequence, read N- to C-terminus: Ketol-acid reductoisomerase (NADP(+)) (337 aa).

The 181-residue stretch at 3-183 folds into the KARI N-terminal Rossmann domain; that stretch reads IELFYDADAD…GGGRAGIIPT (181 aa). Residues 26 to 29, R49, S52, S54, and 84 to 87 each bind NADP(+); these read YGSQ and DTSQ. The active site involves H109. NADP(+) is bound at residue G135. The KARI C-terminal knotted domain occupies 184–329; it reads TFEAETVTDL…AKLRDLMSWV (146 aa). Positions 192, 196, 228, and 232 each coordinate Mg(2+). Position 253 (S253) interacts with substrate.

It belongs to the ketol-acid reductoisomerase family. It depends on Mg(2+) as a cofactor.

It carries out the reaction (2R)-2,3-dihydroxy-3-methylbutanoate + NADP(+) = (2S)-2-acetolactate + NADPH + H(+). It catalyses the reaction (2R,3R)-2,3-dihydroxy-3-methylpentanoate + NADP(+) = (S)-2-ethyl-2-hydroxy-3-oxobutanoate + NADPH + H(+). It participates in amino-acid biosynthesis; L-isoleucine biosynthesis; L-isoleucine from 2-oxobutanoate: step 2/4. Its pathway is amino-acid biosynthesis; L-valine biosynthesis; L-valine from pyruvate: step 2/4. In terms of biological role, involved in the biosynthesis of branched-chain amino acids (BCAA). Catalyzes an alkyl-migration followed by a ketol-acid reduction of (S)-2-acetolactate (S2AL) to yield (R)-2,3-dihydroxy-isovalerate. In the isomerase reaction, S2AL is rearranged via a Mg-dependent methyl migration to produce 3-hydroxy-3-methyl-2-ketobutyrate (HMKB). In the reductase reaction, this 2-ketoacid undergoes a metal-dependent reduction by NADPH to yield (R)-2,3-dihydroxy-isovalerate. This is Ketol-acid reductoisomerase (NADP(+)) from Corynebacterium efficiens (strain DSM 44549 / YS-314 / AJ 12310 / JCM 11189 / NBRC 100395).